Consider the following 324-residue polypeptide: Olfactory receptor 6K2 (324 aa).

Over 1–25 (MESPNRTTIQEFIFSAFPYSWVKSV) the chain is Extracellular. A glycan (N-linked (GlcNAc...) asparagine) is linked at Asn5. A helical membrane pass occupies residues 26-46 (VCFVPLLFIYAFIVVGNLVII). Over 47 to 54 (TVVQLNTH) the chain is Cytoplasmic. Residues 55 to 75 (LHTPMYTFISALSFLEIWYTT) traverse the membrane as a helical segment. Residues 76–98 (ATIPKMLSSLLSERSISFNGCLL) lie on the Extracellular side of the membrane. An intrachain disulfide couples Cys96 to Cys188. The chain crosses the membrane as a helical span at residues 99-119 (QMYFFHSTGICEVCLLTVMAF). At 120–138 (DHYLAICSPLHYPSIMTPK) the chain is on the cytoplasmic side. Residues 139–159 (LCTQLTLSCCVCGFITPLPEI) traverse the membrane as a helical segment. The Extracellular segment spans residues 160–198 (AWISTLPFCGSNHLEHIFCDFLPVLRLACTDTRAIVMIQ). Residues 199–218 (VVDVIHAVEIITAVMLIFMS) traverse the membrane as a helical segment. Over 219–238 (YDGIVAVILRIHSAGGRRTA) the chain is Cytoplasmic. Residues 239–259 (FSTCVSHFIVFSLFFGSVTLM) traverse the membrane as a helical segment. The Extracellular portion of the chain corresponds to 260-272 (YLRFSATYSLFWD). Residues 273–293 (IAIALAFAVLSPFFNPIIYSL) form a helical membrane-spanning segment. The Cytoplasmic segment spans residues 294 to 324 (RNKEIKEAIKKHIGQAKIFFSVRPGTSSKIF).

The protein belongs to the G-protein coupled receptor 1 family.

The protein localises to the cell membrane. Its function is as follows. Odorant receptor. This chain is Olfactory receptor 6K2 (OR6K2), found in Homo sapiens (Human).